The primary structure comprises 408 residues: LL-diaminopimelate aminotransferase (408 aa).

Residues Tyr-15 and Gly-42 each contribute to the substrate site. Pyridoxal 5'-phosphate contacts are provided by residues Tyr-72, 108-109 (SK), Tyr-132, Asn-187, Tyr-218, and 246-248 (SFS). Positions 109, 132, and 187 each coordinate substrate. Lys-249 carries the post-translational modification N6-(pyridoxal phosphate)lysine. Pyridoxal 5'-phosphate is bound by residues Arg-257 and Asn-292. Substrate is bound by residues Asn-292 and Arg-388.

This sequence belongs to the class-I pyridoxal-phosphate-dependent aminotransferase family. LL-diaminopimelate aminotransferase subfamily. In terms of assembly, homodimer. Pyridoxal 5'-phosphate is required as a cofactor.

It carries out the reaction (2S,6S)-2,6-diaminopimelate + 2-oxoglutarate = (S)-2,3,4,5-tetrahydrodipicolinate + L-glutamate + H2O + H(+). The protein operates within amino-acid biosynthesis; L-lysine biosynthesis via DAP pathway; LL-2,6-diaminopimelate from (S)-tetrahydrodipicolinate (aminotransferase route): step 1/1. Functionally, involved in the synthesis of meso-diaminopimelate (m-DAP or DL-DAP), required for both lysine and peptidoglycan biosynthesis. Catalyzes the direct conversion of tetrahydrodipicolinate to LL-diaminopimelate. The chain is LL-diaminopimelate aminotransferase from Prochlorococcus marinus (strain MIT 9515).